The chain runs to 368 residues: 1-aminocyclopropane-1-carboxylate oxidase (368 aa).

Residues 177 to 307 (PFILMGLLHY…RFSIPFFLDP (131 aa)) form the Fe2OG dioxygenase domain. A disordered region spans residues 191–226 (HQEQEEEQEDDESNNGGKKSPNPDESKKPEVEKFGT). The span at 194 to 203 (QEEEQEDDES) shows a compositional bias: acidic residues. Positions 211–223 (PNPDESKKPEVEK) are enriched in basic and acidic residues. Residues histidine 229, aspartate 231, and histidine 287 each coordinate Fe cation. Arginine 298 provides a ligand contact to 2-oxoglutarate.

This sequence belongs to the iron/ascorbate-dependent oxidoreductase family. Fe(2+) serves as cofactor.

It catalyses the reaction 1-aminocyclopropane-1-carboxylate + L-ascorbate + O2 = ethene + L-dehydroascorbate + hydrogen cyanide + CO2 + 2 H2O. The protein operates within alkene biosynthesis; ethylene biosynthesis via S-adenosyl-L-methionine; ethylene from S-adenosyl-L-methionine: step 2/2. Involved in ethylene biosynthesis. Overexpression induces overproduction of ethylene. This is 1-aminocyclopropane-1-carboxylate oxidase (aco) from Dictyostelium discoideum (Social amoeba).